The sequence spans 349 residues: MYISNLRLQNFRNIHAKSFDFKNSINFIVGKNGSGKTSILESIYFLSHSRSFRSSQLNRIINHNADEFIIYTKAYNPDEITISLSRKKNSNNISKLNLEIQKNHTEITRNLPIQLINPESFNIINSGAQQRCKVLDWGAFYLDKTFLKIWQQTKFLVKQRNSALKQNYPYSYILSIDKKLCEFAEILDYKRQAYFTKLKPKIYEILSHFNPNLQLDIDYFRGWNLHKSLAQVLEESFNYDNKYKVTNHGPHKADIVLSVSHKPIQDIFSRGQQKLLICALKLAQGEIHNSENDNKCIYLIDDITSELDSIHTLTLFNYLKQLKSQVFITTTEKNKINEFIDTNSYILEI.

Residue Gly-30–Thr-37 participates in ATP binding.

This sequence belongs to the RecF family.

It localises to the cytoplasm. The RecF protein is involved in DNA metabolism; it is required for DNA replication and normal SOS inducibility. RecF binds preferentially to single-stranded, linear DNA. It also seems to bind ATP. The polypeptide is DNA replication and repair protein RecF (Francisella tularensis subsp. mediasiatica (strain FSC147)).